We begin with the raw amino-acid sequence, 326 residues long: Acetyl-coenzyme A carboxylase carboxyl transferase subunit alpha (326 aa).

Positions 45-298 constitute a CoA carboxyltransferase C-terminal domain; that stretch reads LEARAMQLRE…KQVLLENLDE (254 aa).

This sequence belongs to the AccA family. Acetyl-CoA carboxylase is a heterohexamer composed of biotin carboxyl carrier protein (AccB), biotin carboxylase (AccC) and two subunits each of ACCase subunit alpha (AccA) and ACCase subunit beta (AccD).

The protein resides in the cytoplasm. It carries out the reaction N(6)-carboxybiotinyl-L-lysyl-[protein] + acetyl-CoA = N(6)-biotinyl-L-lysyl-[protein] + malonyl-CoA. Its pathway is lipid metabolism; malonyl-CoA biosynthesis; malonyl-CoA from acetyl-CoA: step 1/1. Functionally, component of the acetyl coenzyme A carboxylase (ACC) complex. First, biotin carboxylase catalyzes the carboxylation of biotin on its carrier protein (BCCP) and then the CO(2) group is transferred by the carboxyltransferase to acetyl-CoA to form malonyl-CoA. The chain is Acetyl-coenzyme A carboxylase carboxyl transferase subunit alpha from Nostoc punctiforme (strain ATCC 29133 / PCC 73102).